The sequence spans 86 residues: Large ribosomal subunit protein uL23 (86 aa).

It belongs to the universal ribosomal protein uL23 family. In terms of assembly, part of the 50S ribosomal subunit. Contacts protein L29.

Functionally, binds to 23S rRNA. One of the proteins that surrounds the polypeptide exit tunnel on the outside of the ribosome. This is Large ribosomal subunit protein uL23 from Aeropyrum pernix (strain ATCC 700893 / DSM 11879 / JCM 9820 / NBRC 100138 / K1).